A 397-amino-acid chain; its full sequence is Enoyl-[acyl-carrier-protein] reductase [NADH] (397 aa).

NAD(+) contacts are provided by residues 48-53, 74-75, 111-112, and 139-140; these read GASTGY, FE, DA, and VA. Tyr-225 provides a ligand contact to substrate. Catalysis depends on Tyr-235, which acts as the Proton donor. Residues Lys-244 and 273–275 contribute to the NAD(+) site; that span reads VVT.

Belongs to the TER reductase family. Monomer.

The enzyme catalyses a 2,3-saturated acyl-[ACP] + NAD(+) = a (2E)-enoyl-[ACP] + NADH + H(+). Its pathway is lipid metabolism; fatty acid biosynthesis. Functionally, involved in the final reduction of the elongation cycle of fatty acid synthesis (FAS II). Catalyzes the reduction of a carbon-carbon double bond in an enoyl moiety that is covalently linked to an acyl carrier protein (ACP). This Burkholderia pseudomallei (strain K96243) protein is Enoyl-[acyl-carrier-protein] reductase [NADH].